A 274-amino-acid polypeptide reads, in one-letter code: Large ribosomal subunit protein uL2 (274 aa).

Disordered regions lie at residues 28–53 and 223–274; these read KPYA…TVRH and VAMN…RRTK. Residues 39-48 show a composition bias toward low complexity; the sequence is KSGGRNNNGR. Residues 254–274 are compositionally biased toward basic residues; that stretch reads KGAKTRKNKRTDKFIVRRRTK.

The protein belongs to the universal ribosomal protein uL2 family. As to quaternary structure, part of the 50S ribosomal subunit. Forms a bridge to the 30S subunit in the 70S ribosome.

Functionally, one of the primary rRNA binding proteins. Required for association of the 30S and 50S subunits to form the 70S ribosome, for tRNA binding and peptide bond formation. It has been suggested to have peptidyltransferase activity; this is somewhat controversial. Makes several contacts with the 16S rRNA in the 70S ribosome. The chain is Large ribosomal subunit protein uL2 from Pseudoalteromonas translucida (strain TAC 125).